Consider the following 327-residue polypeptide: Phenylalanine--tRNA ligase alpha subunit (327 aa).

A Mg(2+)-binding site is contributed by Glu-252.

The protein belongs to the class-II aminoacyl-tRNA synthetase family. Phe-tRNA synthetase alpha subunit type 1 subfamily. In terms of assembly, tetramer of two alpha and two beta subunits. Mg(2+) is required as a cofactor.

The protein localises to the cytoplasm. It carries out the reaction tRNA(Phe) + L-phenylalanine + ATP = L-phenylalanyl-tRNA(Phe) + AMP + diphosphate + H(+). The sequence is that of Phenylalanine--tRNA ligase alpha subunit from Vibrio cholerae serotype O1 (strain ATCC 39541 / Classical Ogawa 395 / O395).